We begin with the raw amino-acid sequence, 431 residues long: Ribosomal RNA small subunit methyltransferase B (431 aa).

S-adenosyl-L-methionine is bound by residues 254–260 (CAAPGGK), Asp-277, Asp-303, and Asp-322. The Nucleophile role is filled by Cys-375.

It belongs to the class I-like SAM-binding methyltransferase superfamily. RsmB/NOP family.

The protein resides in the cytoplasm. It carries out the reaction cytidine(967) in 16S rRNA + S-adenosyl-L-methionine = 5-methylcytidine(967) in 16S rRNA + S-adenosyl-L-homocysteine + H(+). Its function is as follows. Specifically methylates the cytosine at position 967 (m5C967) of 16S rRNA. This is Ribosomal RNA small subunit methyltransferase B from Klebsiella pneumoniae subsp. pneumoniae (strain ATCC 700721 / MGH 78578).